The following is a 367-amino-acid chain: Uroporphyrinogen decarboxylase (367 aa).

An N-acetylmethionine modification is found at M1. Residues R37, A39, R41, R50, D86, Y164, S219, and H339 each contribute to the coproporphyrinogen I site. Positions 37, 39, and 41 each coordinate coproporphyrinogen III. Coproporphyrinogen III-binding residues include D86, Y164, S219, and H339.

It belongs to the uroporphyrinogen decarboxylase family. As to quaternary structure, homodimer.

It is found in the cytoplasm. It localises to the cytosol. The catalysed reaction is uroporphyrinogen III + 4 H(+) = coproporphyrinogen III + 4 CO2. It carries out the reaction uroporphyrinogen I + 4 H(+) = coproporphyrinogen I + 4 CO2. Its pathway is porphyrin-containing compound metabolism; protoporphyrin-IX biosynthesis; coproporphyrinogen-III from 5-aminolevulinate: step 4/4. Catalyzes the sequential decarboxylation of the four acetate side chains of uroporphyrinogen to form coproporphyrinogen and participates in the fifth step in the heme biosynthetic pathway. Isomer I or isomer III of uroporphyrinogen may serve as substrate, but only coproporphyrinogen III can ultimately be converted to heme. In vitro also decarboxylates pentacarboxylate porphyrinogen I. This chain is Uroporphyrinogen decarboxylase, found in Pongo abelii (Sumatran orangutan).